The chain runs to 484 residues: 3-isopropylmalate dehydratase large subunit (484 aa).

Residues C352, C412, and C415 each contribute to the [4Fe-4S] cluster site. The interval 463–484 (TLSSPSDLDPAPASAAIRTDAA) is disordered. Over residues 464–478 (LSSPSDLDPAPASAA) the composition is skewed to low complexity.

This sequence belongs to the aconitase/IPM isomerase family. LeuC type 1 subfamily. In terms of assembly, heterodimer of LeuC and LeuD. [4Fe-4S] cluster is required as a cofactor.

The enzyme catalyses (2R,3S)-3-isopropylmalate = (2S)-2-isopropylmalate. It participates in amino-acid biosynthesis; L-leucine biosynthesis; L-leucine from 3-methyl-2-oxobutanoate: step 2/4. Its function is as follows. Catalyzes the isomerization between 2-isopropylmalate and 3-isopropylmalate, via the formation of 2-isopropylmaleate. The chain is 3-isopropylmalate dehydratase large subunit from Pseudarthrobacter chlorophenolicus (strain ATCC 700700 / DSM 12829 / CIP 107037 / JCM 12360 / KCTC 9906 / NCIMB 13794 / A6) (Arthrobacter chlorophenolicus).